The chain runs to 311 residues: Transcriptional repressor scratch 2 (311 aa).

The segment at 1-20 (MPRSFLVKKIKADGFQCSGV) is SNAG domain. Disordered regions lie at residues 71-90 (PAYP…PQSS) and 120-156 (RRRA…ATAG). Residues 124–146 (GAGGDAAGAGDAGGGGGGGGGGE) show a composition bias toward gly residues. 4 C2H2-type zinc fingers span residues 161–183 (HACA…KQTH), 192–214 (RKCP…VLTH), 218–240 (HKCG…MRSH), and 246–268 (FGCA…MQTH). A C2H2-type 5; atypical zinc finger spans residues 274–297 (YRCRQCDKSFALKSYLHKHCEAAC).

This sequence belongs to the snail C2H2-type zinc-finger protein family.

The protein resides in the nucleus. May be involved in transcriptional regulation. The chain is Transcriptional repressor scratch 2 (Scrt2) from Mus musculus (Mouse).